A 152-amino-acid polypeptide reads, in one-letter code: Protein PLANT CADMIUM RESISTANCE 2 (152 aa).

Residues 57–79 (TAGALYALIAVVTGCACIYSCFY) traverse the membrane as a helical segment.

The protein belongs to the cornifelin family. In terms of assembly, homooligomer. In terms of tissue distribution, expressed in roots, leaves, shoots, stems, flowers and siliques. In leaves, restricted mainly to the vascular tissue. Expressed in all cells in the root tip, in the vascular tissue and the epidermis in the elongation zone, and only in the epidermal cells in the root hair zone.

It is found in the cell membrane. In terms of biological role, zinc transporter acting in both zinc extrusion and long-distance zinc transport. Involved in the loading of zinc into the xyleme and in the detoxification of excess zinc at the epidermal cells. Acts independently from the zinc transporters HMA2 and HMA4. May be also involved in cadmium resistance. The chain is Protein PLANT CADMIUM RESISTANCE 2 (PCR2) from Arabidopsis thaliana (Mouse-ear cress).